A 418-amino-acid polypeptide reads, in one-letter code: MDIGDFVKLELENTTYSGTLMPSLNENTIVIKMKSGYNVGLDKKKIKNIEILESGDKPKYGLPPLNLEKNPKLKNISILSTGGTVASRVDYKTGAVHPAFTADDLIRAVPELMDVANIKGKVILNILSENMLPKYWAMTAEAIKEEIENGAEGIVIAHGTDTMHYTASALSFMVTSEVPIILVGAQRSSDRPSSDAALNIIAAVKAATEPIKGVYVLMHGETGDTVCHLHEGTKVRKLHSSRRDAFKSVNKTPIAEVNPVTKEVKYLRDVKSRDKSKIKEVVLNTNLEEKVALIKVYPGIDSEILKFYVDNGYKGIILEGTGLGHTPETFFEGIDYANENNVLVAMTTQTINGRVNMNVYSNGRELQAKGVIPCEDMLSEVAFVKLMHLLGNYEFEEAKELMPKNIAGEINESINLEC.

The Asparaginase/glutaminase domain maps to 74 to 405 (KNISILSTGG…EEAKELMPKN (332 aa)). Catalysis depends on residues Thr-84, Thr-160, Asp-161, and Lys-237.

This sequence belongs to the asparaginase 1 family. GatD subfamily. In terms of assembly, heterodimer of GatD and GatE.

It carries out the reaction L-glutamyl-tRNA(Gln) + L-glutamine + ATP + H2O = L-glutaminyl-tRNA(Gln) + L-glutamate + ADP + phosphate + H(+). Functionally, allows the formation of correctly charged Gln-tRNA(Gln) through the transamidation of misacylated Glu-tRNA(Gln) in organisms which lack glutaminyl-tRNA synthetase. The reaction takes place in the presence of glutamine and ATP through an activated gamma-phospho-Glu-tRNA(Gln). The GatDE system is specific for glutamate and does not act on aspartate. The chain is Glutamyl-tRNA(Gln) amidotransferase subunit D from Methanococcus maripaludis (strain C6 / ATCC BAA-1332).